The following is a 347-amino-acid chain: GMP reductase (347 aa).

108-131 (ADFQKTKDVMALSDELIFICIDIA) lines the NADP(+) pocket. Residues G181 and G183 each coordinate K(+). The active-site Thioimidate intermediate is the C186. Position 216 to 239 (216 to 239 (IIGDGGCTCPGDVAKAFGGGADFV)) interacts with NADP(+).

The protein belongs to the IMPDH/GMPR family. GuaC type 1 subfamily. In terms of assembly, homotetramer.

It catalyses the reaction IMP + NH4(+) + NADP(+) = GMP + NADPH + 2 H(+). Its function is as follows. Catalyzes the irreversible NADPH-dependent deamination of GMP to IMP. It functions in the conversion of nucleobase, nucleoside and nucleotide derivatives of G to A nucleotides, and in maintaining the intracellular balance of A and G nucleotides. The chain is GMP reductase from Vibrio cholerae serotype O1 (strain ATCC 39541 / Classical Ogawa 395 / O395).